Here is an 810-residue protein sequence, read N- to C-terminus: Lon protease (810 aa).

A Lon N-terminal domain is found at 8–201; the sequence is LPLLPLRGIL…KLCGIVAKEL (194 aa). ATP is bound at residue 353–360; that stretch reads GPPGVGKT. One can recognise a Lon proteolytic domain in the interval 589 to 770; the sequence is NDEVGTVTGM…DQVLAIALLE (182 aa). Residues Ser-676 and Lys-719 contribute to the active site.

Belongs to the peptidase S16 family. Homohexamer. Organized in a ring with a central cavity.

Its subcellular location is the cytoplasm. It carries out the reaction Hydrolysis of proteins in presence of ATP.. Functionally, ATP-dependent serine protease that mediates the selective degradation of mutant and abnormal proteins as well as certain short-lived regulatory proteins. Required for cellular homeostasis and for survival from DNA damage and developmental changes induced by stress. Degrades polypeptides processively to yield small peptide fragments that are 5 to 10 amino acids long. Binds to DNA in a double-stranded, site-specific manner. The protein is Lon protease of Desulforamulus reducens (strain ATCC BAA-1160 / DSM 100696 / MI-1) (Desulfotomaculum reducens).